We begin with the raw amino-acid sequence, 83 residues long: Large ribosomal subunit protein bL31B (83 aa).

Belongs to the bacterial ribosomal protein bL31 family. Type B subfamily. Part of the 50S ribosomal subunit.

The sequence is that of Large ribosomal subunit protein bL31B from Lactobacillus gasseri (strain ATCC 33323 / DSM 20243 / BCRC 14619 / CIP 102991 / JCM 1131 / KCTC 3163 / NCIMB 11718 / NCTC 13722 / AM63).